Here is a 464-residue protein sequence, read N- to C-terminus: Soluble pyridine nucleotide transhydrogenase (464 aa).

35–44 (DNRPLVGGNC) provides a ligand contact to FAD.

Belongs to the class-I pyridine nucleotide-disulfide oxidoreductase family. It depends on FAD as a cofactor.

It is found in the cytoplasm. It catalyses the reaction NAD(+) + NADPH = NADH + NADP(+). Functionally, conversion of NADPH, generated by peripheral catabolic pathways, to NADH, which can enter the respiratory chain for energy generation. This chain is Soluble pyridine nucleotide transhydrogenase, found in Ectopseudomonas mendocina (strain ymp) (Pseudomonas mendocina).